Consider the following 255-residue polypeptide: Indole-3-glycerol phosphate synthase (255 aa).

The protein belongs to the TrpC family.

The enzyme catalyses 1-(2-carboxyphenylamino)-1-deoxy-D-ribulose 5-phosphate + H(+) = (1S,2R)-1-C-(indol-3-yl)glycerol 3-phosphate + CO2 + H2O. It participates in amino-acid biosynthesis; L-tryptophan biosynthesis; L-tryptophan from chorismate: step 4/5. In Streptococcus pneumoniae serotype 19F (strain G54), this protein is Indole-3-glycerol phosphate synthase.